The primary structure comprises 914 residues: Penicillin-binding protein 1A/1B (914 aa).

Residues 1–29 (MSDQFNSREARRKANSKSSPSPKKGKKRK) form a disordered region. The Cytoplasmic segment spans residues 1–37 (MSDQFNSREARRKANSKSSPSPKKGKKRKKGGLFKKT). Residues 38 to 58 (LFTLLILFVLGVVGGAVTFAV) traverse the membrane as a helical; Signal-anchor for type II membrane protein segment. Residues 59-914 (MVSDAPSLDE…TNSSSIEKTN (856 aa)) lie on the Extracellular side of the membrane. The segment at 77 to 246 (STIYDKNGKE…TAYNPVKNPD (170 aa)) is transglycosylase. Residue Glu115 is the Proton donor; for transglycosylase activity of the active site. A transpeptidase region spans residues 329 to 662 (TKAQDKLDEL…PDSVVEATVE (334 aa)). Ser390 acts as the Acyl-ester intermediate; for transpeptidase activity in catalysis. Positions 708–795 (KLSGLNVKYD…SYEVPKAEDD (88 aa)) constitute a Fibronectin type-III domain. The tract at residues 773 to 914 (TAVSDDGKST…TNSSSIEKTN (142 aa)) is disordered. Residues 798 to 828 (KKDQQQTDDEKQDDEKTQDDTQTDDSQKDDG) show a composition bias toward basic and acidic residues. Acidic residues predominate over residues 829–840 (QTDQDQTDDSTN). 2 stretches are compositionally biased toward low complexity: residues 848 to 892 (NTNT…GSDT) and 900 to 914 (SNKT…EKTN).

This sequence in the N-terminal section; belongs to the glycosyltransferase 51 family. In the C-terminal section; belongs to the transpeptidase family. Post-translationally, the product expressed from the translation of the ponA gene appears as two bands on a gel (1A and 1B), but the specific amino acid sequence of each protein is unknown. The N-terminus is blocked.

It localises to the cell membrane. The protein resides in the forespore inner membrane. It carries out the reaction [GlcNAc-(1-&gt;4)-Mur2Ac(oyl-L-Ala-gamma-D-Glu-L-Lys-D-Ala-D-Ala)](n)-di-trans,octa-cis-undecaprenyl diphosphate + beta-D-GlcNAc-(1-&gt;4)-Mur2Ac(oyl-L-Ala-gamma-D-Glu-L-Lys-D-Ala-D-Ala)-di-trans,octa-cis-undecaprenyl diphosphate = [GlcNAc-(1-&gt;4)-Mur2Ac(oyl-L-Ala-gamma-D-Glu-L-Lys-D-Ala-D-Ala)](n+1)-di-trans,octa-cis-undecaprenyl diphosphate + di-trans,octa-cis-undecaprenyl diphosphate + H(+). The enzyme catalyses Preferential cleavage: (Ac)2-L-Lys-D-Ala-|-D-Ala. Also transpeptidation of peptidyl-alanyl moieties that are N-acyl substituents of D-alanine.. It functions in the pathway cell wall biogenesis; peptidoglycan biosynthesis. Functionally, cell wall formation. Synthesis of cross-linked peptidoglycan from the lipid intermediates. The enzyme has a penicillin-insensitive transglycosylase N-terminal domain (formation of linear glycan strands) and a penicillin-sensitive transpeptidase C-terminal domain (cross-linking of the peptide subunits). Required for vegetative growth. Has a partially redundant function with PBP-2A (pbpA) during spore outgrowth. This Bacillus subtilis (strain 168) protein is Penicillin-binding protein 1A/1B (ponA).